We begin with the raw amino-acid sequence, 541 residues long: Atlastin-3 (541 aa).

Residues 1 to 25 form an N-terminal hypervariable region (HVR) region; it reads MLSPQRVAAAASRGADDAMESSKPG. Residues 1-445 are Cytoplasmic-facing; the sequence is MLSPQRVAAA…NVFSTFRTPA (445 aa). The 249-residue stretch at 57–305 folds into the GB1/RHD3-type G domain; sequence DLDVVVVSVA…LIPYVLNPSK (249 aa). GDP is bound by residues arginine 70, lysine 71, glycine 72, lysine 73, serine 74, phenylalanine 75, and arginine 109. Aspartate 142 serves as a coordination point for Mg(2+). Arginine 213, aspartate 214, valine 272, and serine 275 together coordinate GDP. Residues 343-434 form a 3HB (three-helix bundle) domain region; that stretch reads MLQATAEANN…YENFCKHNGS (92 aa). Lysine 391 is subject to N6-acetyllysine. Residues 446 to 466 form a helical membrane-spanning segment; that stretch reads VLFTGIVALYIASGLTGFIGL. Residue glutamate 467 is a topological domain, lumenal. The chain crosses the membrane as a helical span at residues 468-488; the sequence is VVAQLFNCMVGLLLIALLTWG. Residues 489–541 lie on the Cytoplasmic side of the membrane; that stretch reads YIRYSGQYRELGGAIDFGAAYVLEQASSHIGNSTQATVRDAVVGRPSMDKKAQ. Serine 535 is subject to Phosphoserine.

The protein belongs to the TRAFAC class dynamin-like GTPase superfamily. GB1/RHD3 GTPase family. GB1 subfamily. In terms of assembly, monomeric and homodimeric. The homodimer, transiently formed by two molecules on opposing membranes, is the active form mediating ER membrane fusion. Interacts with ZFYVE27; both proteins are involved in endoplasmic reticulum tubular network organization. Interacts with REEP5; both proteins are involved in endoplasmic reticulum tubular network organization. As to expression, expressed in the central nervous system and in dorsal root ganglia neurons. Expressed in peripheral tissues (at protein level).

Its subcellular location is the endoplasmic reticulum membrane. The catalysed reaction is GTP + H2O = GDP + phosphate + H(+). In terms of biological role, atlastin-3 (ATL3) is a membrane-anchored GTPase that mediates the GTP-dependent fusion of endoplasmic reticulum (ER) membranes, maintaining the continuous ER network. It facilitates the formation of three-way junctions where ER tubules intersect. Two atlastin-3 on neighboring ER tubules bind GTP and form loose homodimers through the GB1/RHD3-type G domains and 3HB regions. Upon GTP hydrolysis, the 3HB regions tighten, pulling the membranes together to drive their fusion. After fusion, the homodimer disassembles upon release of inorganic phosphate (Pi). Subsequently, GDP dissociates, resetting the monomers to a conformation ready for a new fusion cycle. This is Atlastin-3 from Homo sapiens (Human).